The following is a 219-amino-acid chain: Mediator of RNA polymerase II transcription subunit 18 (219 aa).

Belongs to the Mediator complex subunit 18 family. As to quaternary structure, component of the Mediator complex. Interacts with YY1 to suppress disease susceptibility via the repression of genes glutaredoxins GRX480, GRXS13 and thioredoxin TRX-h5. Binds to ABI4 to regulate abscisic acid responses; recruited by ABI4 to ABI5 promoter in the presence of abscisic acid (ABA). Interacts with SUF4 to regulate flowering time; recruited by SUF4 to FLC promoter.

It is found in the nucleus. Functionally, component of the Mediator complex, a coactivator involved in the regulated transcription of nearly all RNA polymerase II-dependent genes. Mediator functions as a bridge to convey information from gene-specific regulatory proteins to the basal RNA polymerase II transcription machinery. The Mediator complex, having a compact conformation in its free form, is recruited to promoters by direct interactions with regulatory proteins and serves for the assembly of a functional pre-initiation complex with RNA polymerase II and the general transcription factors. Involved in the regulation of histone H3 lysine tri-methylation (H3K36me3). Associates with the promoter, coding and terminator regions of target genes suggesting its function in transcription initiation, elongation and termination. Multifunctional protein which regulates plant immunity, especially during necrotrophic fungal infection (e.g. B.cinerea and A.brassicicola), flowering time and responses to hormones (e.g. abscisic acid ABA and ethylene) through interactions with distinct transcription factors. In Arabidopsis thaliana (Mouse-ear cress), this protein is Mediator of RNA polymerase II transcription subunit 18.